Consider the following 1411-residue polypeptide: Regulating synaptic membrane exocytosis protein 2 (1411 aa).

The segment at 1 to 33 is disordered; the sequence is MSAPVGPRGRLAPIPAASQPPLQPEMPDLSHLT. Residues 26–185 enclose the RabBD domain; sequence MPDLSHLTEE…TKSGAWFYNS (160 aa). The FYVE-type zinc-finger motif lies at 117-173; that stretch reads KGDAPTCGICHKTKFADGCGHNCSYCQTKFCARCGGRVSLRSNKVMWVCNLCRKQQE. Zn(2+)-binding residues include Cys123, Cys126, Cys139, Cys142, Cys147, Cys150, Cys165, and Cys168. 6 stretches are compositionally biased toward basic and acidic residues: residues 203–216, 273–287, 318–329, 348–366, 382–401, and 410–434; these read NEEAPQEKKPKLHE, DQNRRYDQREEREEY, DSDHLSYRDSNR, RDEYERQRREEEYQSRYRS, EQMRIHAEVSRARHERRHSD, and EDSRISMLRMDRPSRQRSISERRAA. Disordered stretches follow at residues 203–598 and 623–650; these read NEEA…SERQ and SGVDTCSSTTLNEEHSHSDKHPVTWQPS. Ser400 carries the post-translational modification Phosphoserine. Over residues 451–463 the composition is skewed to polar residues; it reads GPSSYAQRTTNHS. A compositionally biased stretch (basic and acidic residues) spans 475 to 492; sequence DRPDLRRTDSLRKQHHLD. Over residues 510-521 the composition is skewed to polar residues; that stretch reads RNDSLSSDQSES. A compositionally biased stretch (basic residues) spans 528 to 537; that stretch reads KPHKSKKGGK. A compositionally biased stretch (acidic residues) spans 558 to 568; that stretch reads SCDDVEIESES. Composition is skewed to basic and acidic residues over residues 569-583 and 634-644; these read VSEKGDSQKGKRKTS and NEEHSHSDKHP. In terms of domain architecture, PDZ spans 668-754; it reads DGSVPRDSGA…EPQVELVVSR (87 aa). Residue Thr689 is modified to Phosphothreonine. Residues 762-793 form a disordered region; the sequence is IPDSTHAQLESSSSSFESQKMDRPSISVTSPM. Ser791 and Ser794 each carry phosphoserine. In terms of domain architecture, C2 1 spans 805 to 928; sequence LSGQLSIKLW…ALLDDEPHWY (124 aa). Disordered stretches follow at residues 939-973 and 993-1190; these read PLPHPSPYMPRRQLHGESPTRRLQRSKRISDSEVS and DLQS…STET. 2 stretches are compositionally biased toward polar residues: residues 994-1015 and 1049-1059; these read LQSSTLSVPEQVMSSNHCSPSG and RTMTGHYNTIS. The segment covering 1060 to 1113 has biased composition (basic and acidic residues); the sequence is RMDRHRVMDDHYSPDRDRDCEAADRQPYHRSRSTEQRPLLERTTTRSRSTERPD. A compositionally biased stretch (polar residues) spans 1143 to 1153; the sequence is GSVQTSPSSTP. Ser1148 carries the phosphoserine modification. Residues 1257–1375 enclose the C2 2 domain; the sequence is AMGDIQVGMM…ELSNMVIGWF (119 aa). Phosphoserine occurs at positions 1396 and 1399.

Interacts with RAB3A and RAB3B that have been activated by GTP-binding. Interacts with RAB3C, RAB3D and RAB26. Interacts with TSPOAP1 and RIMBP2. Interacts with PPFIA3 and PPFIA4. Interacts via its zinc finger with the first C2 domain of UNC13A. Forms a complex consisting of UNC13A, RIMS2 and RAB3A. Heterodimer with PCLO. Part of a ternary complex involving PCLO and EPAC2. As to expression, widely expressed. Expressed in melanocytes. In fetal tissues, predominantly expressed in the brain. In the retina, expressed in the outer plexiform layer (at protein level). In the cerebellum, expressed in Purkinje cells (at protein level). In the pancreas, expressed in Langerhans islets (at protein level).

It is found in the cell membrane. The protein resides in the synapse. The protein localises to the presynaptic cell membrane. In terms of biological role, rab effector involved in exocytosis. May act as scaffold protein. Plays a role in dendrite formation by melanocytes. The protein is Regulating synaptic membrane exocytosis protein 2 (RIMS2) of Homo sapiens (Human).